A 247-amino-acid polypeptide reads, in one-letter code: Small ribosomal subunit protein uS2 (247 aa).

Belongs to the universal ribosomal protein uS2 family.

This chain is Small ribosomal subunit protein uS2, found in Pseudomonas savastanoi pv. phaseolicola (strain 1448A / Race 6) (Pseudomonas syringae pv. phaseolicola (strain 1448A / Race 6)).